An 882-amino-acid polypeptide reads, in one-letter code: Alanine--tRNA ligase (882 aa).

Positions 564, 568, 666, and 670 each coordinate Zn(2+).

It belongs to the class-II aminoacyl-tRNA synthetase family. Zn(2+) serves as cofactor.

It is found in the cytoplasm. The catalysed reaction is tRNA(Ala) + L-alanine + ATP = L-alanyl-tRNA(Ala) + AMP + diphosphate. Functionally, catalyzes the attachment of alanine to tRNA(Ala) in a two-step reaction: alanine is first activated by ATP to form Ala-AMP and then transferred to the acceptor end of tRNA(Ala). Also edits incorrectly charged Ser-tRNA(Ala) and Gly-tRNA(Ala) via its editing domain. This Rubrobacter xylanophilus (strain DSM 9941 / JCM 11954 / NBRC 16129 / PRD-1) protein is Alanine--tRNA ligase.